An 810-amino-acid chain; its full sequence is Oligoxyloglucan-reducing end-specific xyloglucanase (810 aa).

The signal sequence occupies residues 1 to 28 (MRAKNGPGSWLALTAIATSLNTLALAAA). Residue Asn32 is glycosylated (N-linked (GlcNAc...) asparagine). The active-site Nucleophile is the Asp66. The BNR 1 repeat unit spans residues 126-135 (FVSQDRGATF). Asn188 carries an N-linked (GlcNAc...) asparagine glycan. The stretch at 226 to 236 (YVTRDSGESWE) is one BNR 2 repeat. Residues Asn298, Asn312, and Asn321 are each glycosylated (N-linked (GlcNAc...) asparagine). The BNR 3 repeat unit spans residues 359 to 369 (YLSHDGGKSWK). Asn455 is a glycosylation site (N-linked (GlcNAc...) asparagine). The Proton donor role is filled by Asp498. Asn544 carries N-linked (GlcNAc...) asparagine glycosylation. A BNR 4 repeat occupies 554-564 (YSADGGSSWTK). N-linked (GlcNAc...) asparagine glycosylation is found at Asn573 and Asn612. A BNR 5 repeat occupies 617-626 (YVTTDLGQTW). A glycan (N-linked (GlcNAc...) asparagine) is linked at Asn638. 3 BNR repeats span residues 658-667 (YLSRDGGLSY), 705-716 (YHTRNFGKKWTK), and 759-769 (YRSDDNGKTWV).

Belongs to the glycosyl hydrolase 74 family.

Its subcellular location is the secreted. It catalyses the reaction Hydrolysis of cellobiose from the reducing end of xyloglucans consisting of a beta-(1-&gt;4)-linked glucan carrying alpha-D-xylosyl groups on O-6 of the glucose residues. To be a substrate, the first residue must be unsubstituted, the second residue may bear a xylosyl group, whether further glycosylated or not, and the third residue, which becomes the new terminus by the action of the enzyme, is preferably xylosylated, but this xylose residue must not be further substituted.. Functionally, oligoxyloglucan-reducing end-specific xyloglucanase involved in degradation of xyloglucans. Releases the first two glycosyl segments from oligoxyloglucans. Active against cotton xyloglucan, tamarind xyloglucan and tamarind xyloglucan oligomers. In Emericella nidulans (strain FGSC A4 / ATCC 38163 / CBS 112.46 / NRRL 194 / M139) (Aspergillus nidulans), this protein is Oligoxyloglucan-reducing end-specific xyloglucanase (xgcA).